Consider the following 103-residue polypeptide: RNA-binding protein YlxQ (103 aa).

It belongs to the eukaryotic ribosomal protein eL8 family.

Functionally, RNA-binding protein that recognizes the K-turn motif present in ribosomal RNA, but also in box C/D and box C'/D' sRNAs. The protein is RNA-binding protein YlxQ of Enterococcus faecium (Streptococcus faecium).